Consider the following 912-residue polypeptide: Nonsense-mediated mRNA decay factor SMG8 (912 aa).

Positions 565–630 are disordered; sequence EHSNRTPDAS…GEDEDETLEQ (66 aa). The segment covering 570 to 602 has biased composition (polar residues); sequence TPDASTHPPMTNENSPHLSGSQKSQDSASNLTF. The span at 604–614 shows a compositional bias: basic and acidic residues; the sequence is MDEKRDEENKS.

The protein belongs to the SMG8 family.

Functionally, involved in nonsense-mediated decay (NMD) of mRNAs containing premature stop codons. Probable component of kinase complex containing SMG1 and recruited to stalled ribosomes. The protein is Nonsense-mediated mRNA decay factor SMG8 of Culex quinquefasciatus (Southern house mosquito).